A 388-amino-acid polypeptide reads, in one-letter code: STE20-related kinase adapter protein strd-1 (388 aa).

The 284-residue stretch at 52–335 folds into the Protein kinase domain; that stretch reads YDCVRYMGTC…ASDLKSSAWL (284 aa). Residues 58 to 66 and Lys82 contribute to the ATP site; that span reads MGTCNGGQI.

Belongs to the protein kinase superfamily. STE Ser/Thr protein kinase family. STE20 subfamily. As to quaternary structure, interacts with sad-1. Interacts with par-4. Expressed in nervous system, pharynx and excretory canal. Expressed in germline.

The protein resides in the perikaryon. It is found in the nucleus. Its subcellular location is the cell projection. It localises to the dendrite. The protein localises to the axon. The protein resides in the synapse. It is found in the cytoplasm. Its subcellular location is the cell cortex. Its function is as follows. Pseudokinase which may act as an adapter for kinases sad-1 and par-4 and thereby is involved in several developmental processes. Regulates cell-autonomously both neuronal polarity and synaptic organization when bound to sad-1. Required for sad-1 localization to synapses. Required to establish germline stem cell (GSC) quiescence during dauer development, to promote cell shedding during embryogenesis and to control asymmetric cell division of the Q.p neuroblast lineage, probably when bound to par-4. May be involved in maintaining the integrity of the early embryonic cortex when bound to par-4. This Caenorhabditis elegans protein is STE20-related kinase adapter protein strd-1.